Consider the following 246-residue polypeptide: MMPRMGPPSSSKQEPTMFMSFRNPQWPANFINRDNVLDYFCNQGNVFYEMNSCNQQIKMQNITNRSVDECLRNMQGIQYVLWYSQPPLYIVCKQRRNNATNVSPIAYYYVINGSVHQAPDMHTLVQSRLLGALEPLRNAFGEVTNYSRYNTAKGYYWEFKNKPSMKKKEEEKKEEDERKLEERSTNFQKARTMMLLNQLFTEMPADEALEKLDVKEEENPKPEEAPSASAVGEPKFAEPAARATTK.

Disordered stretches follow at residues 165 to 186 (MKKK…RSTN) and 207 to 246 (EALE…ATTK). Basic and acidic residues-rich tracts occupy residues 166 to 184 (KKKE…EERS) and 208 to 224 (ALEK…KPEE).

This sequence belongs to the Mediator complex subunit 6 family. As to quaternary structure, component of the Mediator complex. Interacts with let-19/mdt-13. Interacts with RNA polymerase II. Interacts with mdt-28.

Its subcellular location is the nucleus. Functionally, component of the Mediator complex, a coactivator involved in the regulated transcription of nearly all RNA polymerase II-dependent genes. Mediator functions as a bridge to convey information from gene-specific regulatory proteins to the basal RNA polymerase II transcription machinery. Mediator is recruited to promoters by direct interactions with regulatory proteins and serves as a scaffold for the assembly of a functional preinitiation complex with RNA polymerase II and the general transcription factors. This is Mediator of RNA polymerase II transcription subunit 6 (mdt-6) from Caenorhabditis briggsae.